The sequence spans 196 residues: MVKIGVLALQGAVREHVRCLEAPGVEVSIVKKVEQLEDLDGLVFPGGESTTMRRLIDKYGFFEPLKAFAAQGKPVFGTCAGLILMATRIDGEDHGHLELMDMTVQRNAFGRQRESFETDLIVEGVGDDVRAVFIRAPLIQEVGQNVDVLSKFGDEIVVARQGHLLGCSFHPELTDDRRFHQYFVQMVKEAKTIAQS.

47–49 (GES) serves as a coordination point for L-glutamine. Cys79 acts as the Nucleophile in catalysis. Residues Arg106 and 134-135 (IR) contribute to the L-glutamine site. Residues His170 and Glu172 each act as charge relay system in the active site.

This sequence belongs to the glutaminase PdxT/SNO family. As to quaternary structure, in the presence of PdxS, forms a dodecamer of heterodimers. Only shows activity in the heterodimer.

The enzyme catalyses aldehydo-D-ribose 5-phosphate + D-glyceraldehyde 3-phosphate + L-glutamine = pyridoxal 5'-phosphate + L-glutamate + phosphate + 3 H2O + H(+). It catalyses the reaction L-glutamine + H2O = L-glutamate + NH4(+). It participates in cofactor biosynthesis; pyridoxal 5'-phosphate biosynthesis. Its function is as follows. Catalyzes the hydrolysis of glutamine to glutamate and ammonia as part of the biosynthesis of pyridoxal 5'-phosphate. The resulting ammonia molecule is channeled to the active site of PdxS. The protein is Pyridoxal 5'-phosphate synthase subunit PdxT of Halalkalibacterium halodurans (strain ATCC BAA-125 / DSM 18197 / FERM 7344 / JCM 9153 / C-125) (Bacillus halodurans).